Here is a 188-residue protein sequence, read N- to C-terminus: UPF0301 protein MCA2336 2 (188 aa).

Belongs to the UPF0301 (AlgH) family.

This Methylococcus capsulatus (strain ATCC 33009 / NCIMB 11132 / Bath) protein is UPF0301 protein MCA2336 2.